The primary structure comprises 371 residues: Anhydro-N-acetylmuramic acid kinase (371 aa).

An ATP-binding site is contributed by 12 to 20; the sequence is GTVLDGNID.

Belongs to the anhydro-N-acetylmuramic acid kinase family.

It catalyses the reaction 1,6-anhydro-N-acetyl-beta-muramate + ATP + H2O = N-acetyl-D-muramate 6-phosphate + ADP + H(+). The protein operates within amino-sugar metabolism; 1,6-anhydro-N-acetylmuramate degradation. It participates in cell wall biogenesis; peptidoglycan recycling. In terms of biological role, catalyzes the specific phosphorylation of 1,6-anhydro-N-acetylmuramic acid (anhMurNAc) with the simultaneous cleavage of the 1,6-anhydro ring, generating MurNAc-6-P. Is required for the utilization of anhMurNAc either imported from the medium or derived from its own cell wall murein, and thus plays a role in cell wall recycling. This is Anhydro-N-acetylmuramic acid kinase from Mesorhizobium japonicum (strain LMG 29417 / CECT 9101 / MAFF 303099) (Mesorhizobium loti (strain MAFF 303099)).